Consider the following 147-residue polypeptide: Large ribosomal subunit protein uL13 (147 aa).

The segment at 126–147 (GGPEHPHAAQNPQPYEITQIAQ) is disordered.

Belongs to the universal ribosomal protein uL13 family. As to quaternary structure, part of the 50S ribosomal subunit.

Functionally, this protein is one of the early assembly proteins of the 50S ribosomal subunit, although it is not seen to bind rRNA by itself. It is important during the early stages of 50S assembly. The chain is Large ribosomal subunit protein uL13 from Cutibacterium acnes (strain DSM 16379 / KPA171202) (Propionibacterium acnes).